We begin with the raw amino-acid sequence, 126 residues long: Acyl carrier protein 2, mitochondrial (126 aa).

A mitochondrion-targeting transit peptide spans 1 to 36 (MAARGAMLRYLRVNVNPTIQNPRECVLPFSILLRRF). The 76-residue stretch at 48 to 123 (SEVTDRVLSV…LAVDFIASHP (76 aa)) folds into the Carrier domain. Position 83 is an O-(pantetheine 4'-phosphoryl)serine (Ser-83).

It belongs to the acyl carrier protein (ACP) family. Complex I is composed of at least 49 different subunits. Post-translationally, 4'-phosphopantetheine is transferred from CoA to a specific serine of the apo-ACP-like protein.

It is found in the mitochondrion. It participates in lipid metabolism; fatty acid biosynthesis. In terms of biological role, carrier of the growing fatty acid chain in fatty acid biosynthesis. May be involved in the synthesis of short and medium chain fatty acids. Accessory and non-catalytic subunit of the mitochondrial membrane respiratory chain NADH dehydrogenase (Complex I), which functions in the transfer of electrons from NADH to the respiratory chain. The polypeptide is Acyl carrier protein 2, mitochondrial (MTACP2) (Arabidopsis thaliana (Mouse-ear cress)).